Consider the following 218-residue polypeptide: Adenylate kinase (218 aa).

Residue 10 to 15 (GAGKGT) participates in ATP binding. The segment at 30–59 (STGDMLRAAVKAATPLGLAAKKIMDEGGLV) is NMP. Residues Thr31, Arg36, 57–59 (GLV), 85–88 (GFPR), and Gln92 each bind AMP. An LID region spans residues 122-159 (GRRVHLASGRTYHVTFNPPAVPDKDDLTGEPLVQRNDD). Residues Arg123 and 132-133 (TY) contribute to the ATP site. Residues Arg156 and Arg167 each contribute to the AMP site. An ATP-binding site is contributed by Gly203.

Belongs to the adenylate kinase family. Monomer.

Its subcellular location is the cytoplasm. It catalyses the reaction AMP + ATP = 2 ADP. The protein operates within purine metabolism; AMP biosynthesis via salvage pathway; AMP from ADP: step 1/1. Its function is as follows. Catalyzes the reversible transfer of the terminal phosphate group between ATP and AMP. Plays an important role in cellular energy homeostasis and in adenine nucleotide metabolism. This Chlorobaculum tepidum (strain ATCC 49652 / DSM 12025 / NBRC 103806 / TLS) (Chlorobium tepidum) protein is Adenylate kinase.